The chain runs to 146 residues: Hemoglobin subunit beta (146 aa).

Valine 1 is subject to N-acetylvaline. Positions 2–146 (HLTGEEKSAV…VANALAHKYH (145 aa)) constitute a Globin domain. At threonine 12 the chain carries Phosphothreonine. Serine 44 carries the post-translational modification Phosphoserine. Residue lysine 59 is modified to N6-acetyllysine. Residue histidine 63 participates in heme b binding. Position 82 is an N6-acetyllysine (lysine 82). Histidine 92 contacts heme b. Cysteine 93 is modified (S-nitrosocysteine). At lysine 144 the chain carries N6-acetyllysine.

This sequence belongs to the globin family. As to quaternary structure, heterotetramer of two alpha chains and two beta chains. In terms of tissue distribution, red blood cells.

Its function is as follows. Involved in oxygen transport from the lung to the various peripheral tissues. In Leontocebus fuscicollis (Brown-mantled tamarin), this protein is Hemoglobin subunit beta (HBB).